The chain runs to 780 residues: TSC22 domain family protein 2 (780 aa).

5 disordered regions span residues 20-86, 126-158, 235-499, 587-607, and 736-780; these read AQVA…TVSP, TSAP…PTTC, AHGP…PGGP, LVGQ…PPLS, and LSSN…VSSA. Residues 28 to 37 show a composition bias toward acidic residues; it reads EDTESLDDPD. Residues 126–146 show a composition bias toward low complexity; sequence TSAPAPGAPGGPQLAGSSAGP. Positions 241–262 are enriched in polar residues; it reads GTDSSLTAVSQLPPSEKMSQPT. Low complexity-rich tracts occupy residues 297 to 316, 344 to 361, and 395 to 412; these read GAAT…QPQG, PAVG…AYPQ, and QPSS…ATLP. Polar residues predominate over residues 415 to 434; that stretch reads TGQNASSVGAQLMGASSQPS. The span at 453 to 468 shows a compositional bias: low complexity; it reads QPTGVPPATVGGVVQP. The segment covering 736-756 has biased composition (polar residues); sequence LSSNDQLSQLPTQQANPGSTS. Over residues 765–774 the composition is skewed to pro residues; that stretch reads PPQPTQPPQQ.

The protein belongs to the TSC-22/Dip/Bun family. As to quaternary structure, interacts with NRBP1. Interacts with PKM isoform M2; the interaction results in reduced nuclear levels of PKM isoform M2, leading to repression of cyclin CCND1 transcription and reduced cell growth. Interacts with WDR77.

Its function is as follows. Reduces the level of nuclear PKM isoform M2 which results in repression of cyclin CCND1 transcription and reduced cell growth. The sequence is that of TSC22 domain family protein 2 from Homo sapiens (Human).